The primary structure comprises 69 residues: Trypsin/subtilisin inhibitor (69 aa).

C4 and C49 are disulfide-bonded.

Belongs to the protease inhibitor I13 (potato type I serine protease inhibitor) family.

In terms of biological role, inhibitor of trypsin, chymotrypsin, subtilisin, etc. The sequence is that of Trypsin/subtilisin inhibitor from Amaranthus caudatus (Love-lies-bleeding).